Here is a 221-residue protein sequence, read N- to C-terminus: Tetraspanin-2 (221 aa).

Residues 1–13 (MGRFRGGLRCIKY) are Cytoplasmic-facing. A helical membrane pass occupies residues 14–34 (LLLGFNLLFWLAGSAVIAFGL). The Extracellular portion of the chain corresponds to 35-54 (WFRFGGTMKDLSSEDKSPEY). Residues 55-75 (FYVGLYVLVGAGALMMTVGFF) form a helical membrane-spanning segment. At 76–90 (GCCGAMRESQCVLGS) the chain is on the cytoplasmic side. The chain crosses the membrane as a helical span at residues 91–111 (FFTCLLVIFAAEVTTGVFAFI). Residues 112–188 (GKDVAIRHVQ…ETVISAKLQL (77 aa)) are Extracellular-facing. Asn139 is a glycosylation site (N-linked (GlcNAc...) asparagine). The helical transmembrane segment at 189 to 209 (IGIVGIGIAGLTIFGMIFSMV) threads the bilayer. Topologically, residues 210 to 221 (LCCAIRNSRDVI) are cytoplasmic.

The protein belongs to the tetraspanin (TM4SF) family.

It localises to the membrane. May play a role in signalling in oligodendrocytes in the early stages of their terminal differentiation into myelin-forming glia and may also function in stabilizing the mature sheath. The protein is Tetraspanin-2 (Tspan2) of Mus musculus (Mouse).